A 306-amino-acid chain; its full sequence is Putative type I specificity subunit S.MpnORF285P (306 aa).

Belongs to the type-I restriction system S methylase family. The methyltransferase is composed of M and S polypeptides.

Functionally, the specificity (S) subunit of a type I methyltransferase (MTase); this subunit dictates DNA sequence specificity. The single R subunit has multiple frameshifts and is probably not expressed. The sequence is that of Putative type I specificity subunit S.MpnORF285P from Mycoplasma pneumoniae (strain ATCC 29342 / M129 / Subtype 1) (Mycoplasmoides pneumoniae).